Consider the following 1077-residue polypeptide: Carbamoyl phosphate synthase large chain (1077 aa).

A carboxyphosphate synthetic domain region spans residues 1–403; sequence MPKRTDIQSI…SLHKALRGLE (403 aa). 12 residues coordinate ATP: R129, R169, G175, G176, E208, L210, E215, G241, I242, H243, Q285, and E299. The ATP-grasp 1 domain occupies 133–328; that stretch reads DKAMKSIGLE…IAKIAAKLAV (196 aa). Residues Q285, E299, and N301 each coordinate Mg(2+). Mn(2+)-binding residues include Q285, E299, and N301. An oligomerization domain region spans residues 404-553; the sequence is VGATGFDEMV…YSSYDEECEA (150 aa). Positions 554-935 are carbamoyl phosphate synthetic domain; the sequence is NPTDKDKIMV…AYAKAELGCG (382 aa). Positions 678–869 constitute an ATP-grasp 2 domain; sequence QAAVERLGLL…LAKIAARVMA (192 aa). 10 residues coordinate ATP: R714, R753, L755, E760, G785, V786, H787, S788, Q828, and E840. The Mg(2+) site is built by Q828, E840, and N842. 3 residues coordinate Mn(2+): Q828, E840, and N842. In terms of domain architecture, MGS-like spans 936 to 1077; that stretch reads SVYPEGGRAL…HAKVKASLEA (142 aa). An allosteric domain region spans residues 936 to 1077; sequence SVYPEGGRAL…HAKVKASLEA (142 aa).

Belongs to the CarB family. As to quaternary structure, composed of two chains; the small (or glutamine) chain promotes the hydrolysis of glutamine to ammonia, which is used by the large (or ammonia) chain to synthesize carbamoyl phosphate. Tetramer of heterodimers (alpha,beta)4. The cofactor is Mg(2+). Requires Mn(2+) as cofactor.

The enzyme catalyses hydrogencarbonate + L-glutamine + 2 ATP + H2O = carbamoyl phosphate + L-glutamate + 2 ADP + phosphate + 2 H(+). It carries out the reaction hydrogencarbonate + NH4(+) + 2 ATP = carbamoyl phosphate + 2 ADP + phosphate + 2 H(+). Its pathway is amino-acid biosynthesis; L-arginine biosynthesis; carbamoyl phosphate from bicarbonate: step 1/1. It participates in pyrimidine metabolism; UMP biosynthesis via de novo pathway; (S)-dihydroorotate from bicarbonate: step 1/3. Functionally, large subunit of the glutamine-dependent carbamoyl phosphate synthetase (CPSase). CPSase catalyzes the formation of carbamoyl phosphate from the ammonia moiety of glutamine, carbonate, and phosphate donated by ATP, constituting the first step of 2 biosynthetic pathways, one leading to arginine and/or urea and the other to pyrimidine nucleotides. The large subunit (synthetase) binds the substrates ammonia (free or transferred from glutamine from the small subunit), hydrogencarbonate and ATP and carries out an ATP-coupled ligase reaction, activating hydrogencarbonate by forming carboxy phosphate which reacts with ammonia to form carbamoyl phosphate. In Vibrio parahaemolyticus serotype O3:K6 (strain RIMD 2210633), this protein is Carbamoyl phosphate synthase large chain.